We begin with the raw amino-acid sequence, 445 residues long: Tubulin beta-9 chain (445 aa).

Positions 11, 69, 138, 142, 143, 144, 204, and 226 each coordinate GTP. Residue glutamate 69 coordinates Mg(2+). Positions glutamine 423 to alanine 445 are disordered. Over residues threonine 429 to alanine 445 the composition is skewed to acidic residues.

This sequence belongs to the tubulin family. Dimer of alpha and beta chains. A typical microtubule is a hollow water-filled tube with an outer diameter of 25 nm and an inner diameter of 15 nM. Alpha-beta heterodimers associate head-to-tail to form protofilaments running lengthwise along the microtubule wall with the beta-tubulin subunit facing the microtubule plus end conferring a structural polarity. Microtubules usually have 13 protofilaments but different protofilament numbers can be found in some organisms and specialized cells. The cofactor is Mg(2+).

It is found in the cytoplasm. The protein localises to the cytoskeleton. In terms of biological role, tubulin is the major constituent of microtubules, a cylinder consisting of laterally associated linear protofilaments composed of alpha- and beta-tubulin heterodimers. Microtubules grow by the addition of GTP-tubulin dimers to the microtubule end, where a stabilizing cap forms. Below the cap, tubulin dimers are in GDP-bound state, owing to GTPase activity of alpha-tubulin. This chain is Tubulin beta-9 chain, found in Gossypium hirsutum (Upland cotton).